A 358-amino-acid polypeptide reads, in one-letter code: Alanine racemase (358 aa).

Lys-35 (proton acceptor; specific for D-alanine) is an active-site residue. Position 35 is an N6-(pyridoxal phosphate)lysine (Lys-35). Arg-130 contacts substrate. The active-site Proton acceptor; specific for L-alanine is Tyr-255. Met-303 is a binding site for substrate.

The protein belongs to the alanine racemase family. Pyridoxal 5'-phosphate is required as a cofactor.

The catalysed reaction is L-alanine = D-alanine. It functions in the pathway amino-acid biosynthesis; D-alanine biosynthesis; D-alanine from L-alanine: step 1/1. Functionally, catalyzes the interconversion of L-alanine and D-alanine. May also act on other amino acids. This Shewanella sediminis (strain HAW-EB3) protein is Alanine racemase (alr).